A 102-amino-acid polypeptide reads, in one-letter code: 10 kDa heat shock protein, mitochondrial (102 aa).

The residue at position 2 (Ala-2) is an N-acetylalanine. N6-acetyllysine is present on Lys-8. Lys-28 is modified (N6-succinyllysine). Position 40 is an N6-acetyllysine; alternate (Lys-40). N6-malonyllysine; alternate is present on residues Lys-40, Lys-54, and Lys-56. An N6-succinyllysine; alternate mark is found at Lys-40, Lys-54, Lys-56, Lys-66, and Lys-70. N6-acetyllysine; alternate is present on residues Lys-56, Lys-66, and Lys-70. A Phosphothreonine modification is found at Thr-79. Residues Lys-80 and Lys-86 each carry the N6-acetyllysine; alternate modification. 2 positions are modified to N6-succinyllysine; alternate: Lys-80 and Lys-86. N6-acetyllysine is present on Lys-99.

Belongs to the GroES chaperonin family. In terms of assembly, homoheptamer arranged in a ring structure. 2 heptameric Hsp10 rings interact with a Hsp60 tetradecamer in the structure of a back-to-back double heptameric ring to form the symmetrical football complex.

It is found in the mitochondrion matrix. In terms of biological role, co-chaperonin implicated in mitochondrial protein import and macromolecular assembly. Together with Hsp60, facilitates the correct folding of imported proteins. May also prevent misfolding and promote the refolding and proper assembly of unfolded polypeptides generated under stress conditions in the mitochondrial matrix. The functional units of these chaperonins consist of heptameric rings of the large subunit Hsp60, which function as a back-to-back double ring. In a cyclic reaction, Hsp60 ring complexes bind one unfolded substrate protein per ring, followed by the binding of ATP and association with 2 heptameric rings of the co-chaperonin Hsp10. This leads to sequestration of the substrate protein in the inner cavity of Hsp60 where, for a certain period of time, it can fold undisturbed by other cell components. Synchronous hydrolysis of ATP in all Hsp60 subunits results in the dissociation of the chaperonin rings and the release of ADP and the folded substrate protein. This is 10 kDa heat shock protein, mitochondrial (HSPE1) from Bos taurus (Bovine).